The following is a 318-amino-acid chain: Aspartate carbamoyltransferase catalytic subunit (318 aa).

Carbamoyl phosphate is bound by residues R59 and T60. K87 contacts L-aspartate. 3 residues coordinate carbamoyl phosphate: R109, H137, and Q140. Positions 170 and 224 each coordinate L-aspartate. Positions 265 and 266 each coordinate carbamoyl phosphate.

Belongs to the aspartate/ornithine carbamoyltransferase superfamily. ATCase family. As to quaternary structure, heterododecamer (2C3:3R2) of six catalytic PyrB chains organized as two trimers (C3), and six regulatory PyrI chains organized as three dimers (R2).

The catalysed reaction is carbamoyl phosphate + L-aspartate = N-carbamoyl-L-aspartate + phosphate + H(+). The protein operates within pyrimidine metabolism; UMP biosynthesis via de novo pathway; (S)-dihydroorotate from bicarbonate: step 2/3. Catalyzes the condensation of carbamoyl phosphate and aspartate to form carbamoyl aspartate and inorganic phosphate, the committed step in the de novo pyrimidine nucleotide biosynthesis pathway. The sequence is that of Aspartate carbamoyltransferase catalytic subunit from Rhizobium johnstonii (strain DSM 114642 / LMG 32736 / 3841) (Rhizobium leguminosarum bv. viciae).